The chain runs to 144 residues: L-fucose mutarotase (144 aa).

Catalysis depends on His22, which acts as the Proton donor. Substrate-binding positions include Asp30, Arg109, and Tyr131 to Asn133.

The protein belongs to the RbsD / FucU family. FucU mutarotase subfamily. As to quaternary structure, homodecamer.

The protein resides in the cytoplasm. The enzyme catalyses alpha-L-fucose = beta-L-fucose. Its pathway is carbohydrate metabolism; L-fucose metabolism. Functionally, involved in the anomeric conversion of L-fucose. The chain is L-fucose mutarotase from Haemophilus influenzae (strain PittEE).